Here is a 400-residue protein sequence, read N- to C-terminus: Polyadenylate-binding protein-interacting protein 1 (400 aa).

Over residues 1 to 10 the composition is skewed to basic and acidic residues; it reads MSDSFDRAPE. Positions 1-36 are disordered; it reads MSDSFDRAPEQTKPQRAPPSSQDKIPQQNSESAMAK. Over residues 12-32 the composition is skewed to polar residues; it reads TKPQRAPPSSQDKIPQQNSES. Residues 37-64 form a PABPC1-interacting motif-2 (PAM2) region; sequence PQVVVAPVLMSKLSANAPEFYPSGYSSN. A PAIP1 middle domain (PAIP1M) region spans residues 78–296; it reads TLSEYVQDFL…LLKLVELRSS (219 aa). The region spanning 80–297 is the MIF4G domain; the sequence is SEYVQDFLNH…LKLVELRSSN (218 aa). The disordered stretch occupies residues 356 to 376; sequence DYEENGTDLSGAGDPYLDDID. A PABPC1-interacting motif-1 (PAM1) region spans residues 361-400; the sequence is GTDLSGAGDPYLDDIDDEMDPEIEEAYEKFCLESERKRKQ.

In terms of assembly, interacts with the RRM1-RRM2 and C-terminus regions of PABPC1 in a 1:1 stoichiometry. Interacts with EIF4A.

It is found in the cytoplasm. Acts as a coactivator in the regulation of translation initiation of poly(A)-containing mRNAs. Its stimulatory activity on translation is mediated via its action on PABPC1. Competes with PAIP2 for binding to PABPC1. Its association with EIF4A and PABPC1 may potentiate contacts between mRNA termini. May also be involved in translationally coupled mRNA turnover. Implicated with other RNA-binding proteins in the cytoplasmic deadenylation/translational and decay interplay of the FOS mRNA mediated by the major coding-region determinant of instability (mCRD) domain. This is Polyadenylate-binding protein-interacting protein 1 (Paip1) from Mus musculus (Mouse).